Reading from the N-terminus, the 1097-residue chain is Nitric oxide synthase-like protein (1097 aa).

Position 77 (cysteine 77) interacts with heme b. The L-arginine site is built by glutamine 140, tryptophan 249, tyrosine 250, glutamate 254, and asparagine 259. (6R)-L-erythro-5,6,7,8-tetrahydrobiopterin is bound by residues tryptophan 340 and phenylalanine 353. Residue tyrosine 368 coordinates heme b. The interval lysine 387–phenylalanine 410 is calmodulin-binding. The region spanning alanine 420–phenylalanine 615 is the Flavodoxin-like domain. Residues threonine 426–lysine 430 and valine 561–histidine 592 contribute to the FMN site. Residues lysine 669–proline 914 form the FAD-binding FR-type domain. FAD contacts are provided by residues tyrosine 704 to cysteine 715 and leucine 847 to serine 857. NADP(+) is bound by residues isoleucine 922–arginine 940 and glycine 1019–valine 1034.

Belongs to the NOS family. Heme b is required as a cofactor. It depends on FAD as a cofactor. FMN serves as cofactor.

It carries out the reaction 2 L-arginine + 3 NADPH + 4 O2 + H(+) = 2 L-citrulline + 2 nitric oxide + 3 NADP(+) + 4 H2O. Produces nitric oxide (NO) which is a messenger molecule with diverse functions throughout the body. This chain is Nitric oxide synthase-like protein, found in Bombyx mori (Silk moth).